The chain runs to 151 residues: Large ribosomal subunit protein uL30 (151 aa).

It belongs to the universal ribosomal protein uL30 family. In terms of assembly, part of the 50S ribosomal subunit.

In Methanothrix thermoacetophila (strain DSM 6194 / JCM 14653 / NBRC 101360 / PT) (Methanosaeta thermophila), this protein is Large ribosomal subunit protein uL30.